The primary structure comprises 143 residues: MFMGEYQHNIDIKGRLIVPAKFRELLGDNFVITRGLDKCLFAYPQEEWKKLEEKLQTLPLTKKDARSFTRFFFSGASECELDKQGRINIPSNLLQYADLEKETVIIGVSSRIEIWSKSEWDDVFNEAEESFADLAENMIGFDI.

SpoVT-AbrB domains lie at glutamate 5–glutamate 47 and alanine 76–glutamate 119.

Belongs to the MraZ family. In terms of assembly, forms oligomers.

It is found in the cytoplasm. It localises to the nucleoid. This is Transcriptional regulator MraZ from Listeria monocytogenes serotype 4b (strain CLIP80459).